The primary structure comprises 247 residues: Particulate methane monooxygenase beta subunit (247 aa).

Helical transmembrane passes span 23–43 (WMAL…HAML), 59–79 (LWVT…QSYL), 86–106 (PWGA…NRYF), 111–131 (WTYF…AIIL), 145–165 (AIVG…PIIA), and 215–235 (VSAF…HFIG).

In terms of assembly, m.capsulatus has two forms of methane monooxygenase, a soluble (sMMO) and a membrane-bound (particulate) type (pMMO). The particulate type is a nonamer composed of three alpha:beta:gamma heterotrimeric protomers assembled into a cylindrical structure; the beta and gamma subunits comprise the bulk of the membrane-spanning regions and the soluble regions are derived primarily from alpha subunits which form two antiparallel beta-barrel-like structures each. This assembly, also called pMMO hydroxylase (pMMO-H), is proposed to associate with methanol dehydrogenase (MDH), also designated as pMMO-R, to form the pMMO-C complex which seems to have greater methane monooxygenase activity.

Its subcellular location is the membrane. It catalyses the reaction methane + a quinol + O2 = methanol + a quinone + H2O. Non-catalytic subunit of the methane monooxygenase that is responsible for the initial oxygenation of methane to methanol in methanotrophs. At least in vitro, specific quinols can replace NADH as reductants. In Methylococcus capsulatus (strain ATCC 33009 / NCIMB 11132 / Bath), this protein is Particulate methane monooxygenase beta subunit (pmoA1).